The following is a 1733-amino-acid chain: Serine-aspartate repeat-containing protein F (1733 aa).

The signal sequence occupies residues 1–45 (MKKRRQGPINKRVDFLSNKVNKYSIRKFTVGTASILVGATLMFGA). Residues 46–678 (ADNEAKAAED…GSSTAQGDNP (633 aa)) are ligand binding A region. 2 disordered regions span residues 51-269 (KAAE…SVND) and 332-351 (PLALNRSQSKNSPHKSASPR). Residues 61–74 (ASKEEQKGSRDNEN) are compositionally biased toward basic and acidic residues. Composition is skewed to polar residues over residues 85 to 99 (GSHSSEKTTNVNNAT) and 146 to 168 (PKTSTTQQDSTEKNNPSLKDNLN). A compositionally biased stretch (basic and acidic residues) spans 175-184 (KESKTDEHST). A compositionally biased stretch (polar residues) spans 186 to 226 (QAQMSTNKSNLDTNDSPTQSEKTSSQANNDSTDNQSAPSKQ). Residues 227-253 (LDSKPSEQKVYKTKFNDEPTQDVEHTT) are compositionally biased toward basic and acidic residues. Polar residues-rich tracts occupy residues 255–266 (KLKTPSVSTDSS) and 336–346 (NRSQSKNSPHK). CNA-B domains follow at residues 679–797 (TYSL…YLTP), 798–907 (KYNV…FYKP), 908–1018 (TYNL…YKTP), and 1019–1129 (KYSV…FDDD). A type I collagen binding region region spans residues 679–1129 (TYSLGDYVWL…SIDNGYFDDD (451 aa)). The interval 862 to 890 (FETPEGYTPTKQNSGSDEGKDSNGTKTTV) is disordered. Residues 1085-1708 (KPEGMTQTTA…ANEDHDSKGT (624 aa)) are disordered. Basic and acidic residues predominate over residues 1107-1119 (EDVRVTITDHDDF). Over residues 1125–1684 (YFDDDSDSDS…DSDSDSDSDS (560 aa)) the composition is skewed to acidic residues. Residues 1685 to 1706 (DSDKNAKDKLPDTGANEDHDSK) are compositionally biased toward basic and acidic residues. The short motif at 1694 to 1698 (LPDTG) is the LPXTG sorting signal element. Thr1697 is subject to Pentaglycyl murein peptidoglycan amidated threonine. A propeptide spans 1698–1733 (GANEDHDSKGTLLGTLFAGLGALLLGRRRKKDNKEK) (removed by sortase).

This sequence belongs to the serine-aspartate repeat-containing protein (SDr) family.

Its subcellular location is the secreted. The protein resides in the cell wall. Binds to type I collagen via alpha-2(I) or alpha-1(I) chains, although its affinity for the alpha-1(I) chain is significantly higher. Involved in bacterial adherence to transcutaneous drivelines from explanted ventricular assist devices. The protein is Serine-aspartate repeat-containing protein F (sdrF) of Staphylococcus epidermidis.